The chain runs to 564 residues: Eukaryotic translation initiation factor 3 subunit L (564 aa).

The 207-residue stretch at 331–537 folds into the PCI domain; sequence DAIRVFANIL…IHIADTKVAR (207 aa).

It belongs to the eIF-3 subunit L family. As to quaternary structure, component of the eukaryotic translation initiation factor 3 (eIF-3) complex, which is composed of 13 subunits: EIF3A, EIF3B, EIF3C, EIF3D, EIF3E, EIF3F, EIF3G, EIF3H, EIF3I, EIF3J, EIF3K, EIF3L and EIF3M.

It localises to the cytoplasm. Its function is as follows. Component of the eukaryotic translation initiation factor 3 (eIF-3) complex, which is involved in protein synthesis of a specialized repertoire of mRNAs and, together with other initiation factors, stimulates binding of mRNA and methionyl-tRNAi to the 40S ribosome. The eIF-3 complex specifically targets and initiates translation of a subset of mRNAs involved in cell proliferation. The polypeptide is Eukaryotic translation initiation factor 3 subunit L (Gallus gallus (Chicken)).